Here is a 44-residue protein sequence, read N- to C-terminus: uncharacterized protein (44 aa).

An N-terminal signal peptide occupies residues 1–16 (MRISLLAVILALLFVA).

This is an uncharacterized protein from Helicobacter pylori (strain ATCC 700392 / 26695) (Campylobacter pylori).